The following is a 132-amino-acid chain: Fatty acid-binding protein 2 (132 aa).

Ser2 is subject to N-acetylserine. Residues Gln40 and 128–130 (RYY) contribute to the hexadecanoate site.

Belongs to the calycin superfamily. Fatty-acid binding protein (FABP) family. Monomer. In terms of tissue distribution, midgut.

It localises to the cytoplasm. Functionally, binds fatty acids in a 1:1 molar ratio. The protein is Fatty acid-binding protein 2 (MFB2) of Manduca sexta (Tobacco hawkmoth).